Reading from the N-terminus, the 438-residue chain is MLQIYNSLTRKKEFFKPDHPPQINIYVCGPTVYNHLHLGNTRPLIFFDTVKRYLEMLKFKVYYVVNITDIDDKIIETSLKNQVLEKDLANKYIKSFNNLLETLNIQTINFKPQATQYINSMILYIQTLLDQGFAYFTDQGIYFRVSKITDYGKLKKQDLSQLKQNVRKQLDPQKEFPGDFILWKKTSQGITYPSPWFAGRPGWHTECATMIEQLFKLPLDIHGGGTDLKFPHHENEIAQTHAHSHQKLANFFMHVERLDYQNQKMSKSLGNIIWCKDLLKQYNPCIIKFLILSTHYRKPINFSYDLMEQTQQKYKKITYFLTKNNFYLKVNHFFCQTLDQDIMQLFHQLMQDDFATHKVIDLMEQIIKRAHQTQILDKLSQFQNSLLLILNTLVIAIPFNKPTKKDLQTYFLWQDARKCRDFIQADILRKQLLDKGFI.

Position 28 (Cys-28) interacts with Zn(2+). A 'HIGH' region motif is present at residues Pro-30–Asn-40. Residues Cys-207, His-232, and Glu-236 each coordinate Zn(2+). Residues Lys-264–Ser-268 carry the 'KMSKS' region motif. Lys-267 provides a ligand contact to ATP.

The protein belongs to the class-I aminoacyl-tRNA synthetase family. As to quaternary structure, monomer. The cofactor is Zn(2+).

It is found in the cytoplasm. The catalysed reaction is tRNA(Cys) + L-cysteine + ATP = L-cysteinyl-tRNA(Cys) + AMP + diphosphate. This chain is Cysteine--tRNA ligase, found in Aster yellows witches'-broom phytoplasma (strain AYWB).